Consider the following 67-residue polypeptide: Large ribosomal subunit protein bL32 (67 aa).

The span at 1–19 (MAVPKRKMSRSNTRSRRSQ) shows a compositional bias: basic residues. The segment at 1–22 (MAVPKRKMSRSNTRSRRSQWKA) is disordered.

The protein belongs to the bacterial ribosomal protein bL32 family.

This Kineococcus radiotolerans (strain ATCC BAA-149 / DSM 14245 / SRS30216) protein is Large ribosomal subunit protein bL32.